A 620-amino-acid chain; its full sequence is MRDIVFVSPQLYLSSQEGWKSDSAKSGFIPILKNDLQRFQDSLKHIVDARNSLSETLLNSKDDGSIHNSDQNTGLNKDKEASIADNNSANKCATSSSRYQELKQFLPISLDQQIHTVSLQGVSSSFSRGQIESLLDHCLNLALTETQSNSALKVEAWSSFSSFLDTQDIFIRFSKVDEDEAFVNTLNYCKALFAFIRKLHEDFKIELHLDLNTKEYVEDRTGTIPSVKPEKASEFYSVFKNIEDQTDERNSKKEQLDDSSTQYKVDTNTLSDLPSDALDQLCKDIIEFRTKVVSIEKEKKMKSTYEESRRQRHQMQKVFDQIRKNHSGAKGSANTEEEDTNMEDEDEEDDTEDDLALEKRKEERDLEESNRRYEDMLHQLHSNTEPKIKSIRADIMSAENYEEHLEKNRSLYLKELLHLANDVHYDHHRSFKEQEERRDEEDRAKNGNAKELAPIQLSDGKAISAGKAAAITLPEGTVKSENYNADKNVSESSEHVKIKFDFKKAIDHSVESSSEDEGYRESELPPTKPSERSAAEDRLPFTADELNIRLTNLKESRYVDELVREFLGVYEDELVEYILENIRVNQSKQALLNELRETFDEDGETIADRLWSRKEFRLGT.

5 disordered regions span residues 58 to 82 (LNSK…KEAS), 246 to 270 (TDER…TNTL), 323 to 373 (RKNH…NRRY), 428 to 452 (HRSF…AKEL), and 509 to 537 (SVES…AAED). Residues 66 to 75 (IHNSDQNTGL) show a composition bias toward polar residues. Residues 246 to 256 (TDERNSKKEQL) are compositionally biased toward basic and acidic residues. Residues 258 to 270 (DSSTQYKVDTNTL) show a composition bias toward polar residues. The stretch at 296 to 385 (EKEKKMKSTY…MLHQLHSNTE (90 aa)) forms a coiled coil. A compositionally biased stretch (acidic residues) spans 335 to 355 (TEEEDTNMEDEDEEDDTEDDL). 2 stretches are compositionally biased toward basic and acidic residues: residues 356-373 (ALEK…NRRY) and 431-445 (FKEQ…DRAK). Phosphoserine occurs at positions 512 and 514. The segment covering 517-537 (EGYRESELPPTKPSERSAAED) has biased composition (basic and acidic residues).

Belongs to the SNU71 family. In terms of assembly, component of the U1 snRNP particle, a subcomplex of the spliceosome.

It is found in the cytoplasm. It localises to the nucleus. In terms of biological role, component of the U1 snRNP particle, which recognizes and binds the 5'-splice site of pre-mRNA. Together with other non-snRNP factors, U1 snRNP forms the spliceosomal commitment complex, that targets pre-mRNA to the splicing pathway. This Saccharomyces cerevisiae (strain YJM789) (Baker's yeast) protein is U1 small nuclear ribonucleoprotein component SNU71 (SNU71).